A 362-amino-acid polypeptide reads, in one-letter code: MKESKKRVLVGMSGGIDSTATCLMLQEQGYEIVGVTMRVWGDEPQDARELAARMGIEHYVADERVPFKDTIVKNFIDEYRQGRTPNPCVMCNPLFKFRMLIEWADKLGCDWIATGHYSRLEERNGHIYIVAGDDDKKDQSYFLWRLGQDVLRRCIFPLGNYTKQTVRDYLHEKGYEAKSKEGESMEVCFIKGDYRDFLREQCPELDAEVGPGWFVSSEGVKLGQHKGFPYYTIGQRKGLEIALGKPAYVLKINPQKNTVMLGDAGQLKAEYMVAEQDNIVDEDELFACPDLAVRIRYRSRPIPCRVKRLEDGHLLVRFLAEASAIAPGQSAVFYEGRRVLGGAFIASQRGIGLVIEQNKDWK.

Residues 11-18 and methionine 37 each bind ATP; that span reads GMSGGIDS. Cysteine 91 serves as the catalytic Nucleophile. Cysteine 91 and cysteine 188 form a disulfide bridge. ATP is bound at residue glycine 115. Residues 137–139 are interaction with tRNA; sequence KDQ. The active-site Cysteine persulfide intermediate is the cysteine 188. The segment at 296-297 is interaction with tRNA; that stretch reads RY.

This sequence belongs to the MnmA/TRMU family.

It localises to the cytoplasm. It catalyses the reaction S-sulfanyl-L-cysteinyl-[protein] + uridine(34) in tRNA + AH2 + ATP = 2-thiouridine(34) in tRNA + L-cysteinyl-[protein] + A + AMP + diphosphate + H(+). Functionally, catalyzes the 2-thiolation of uridine at the wobble position (U34) of tRNA, leading to the formation of s(2)U34. This chain is tRNA-specific 2-thiouridylase MnmA 3, found in Bacteroides fragilis (strain YCH46).